A 555-amino-acid polypeptide reads, in one-letter code: MKSLIGTLGLYCLFILTNNVVSSYGDDLYPLTIMHTNDFHARFEETNVKGNPCKSGEKCIGGLARVLHTIKKIIKEQEKKNIESLYINAGDNFQGTIWYNIGRWNVTSELMNIQPPDVMVLGNHEFDHGIDGLLPFLNNMDKTEIVVANMDARDEPQVAKKIKPFTIIKKKYRNIGVIGVVVEEVPDLANTGKLKFRNESEAILEAARNLKKEDPSVNIIIVVSHVGFDVDKIIAERTGSEVDIIVGGHSHTVLYTGTPPGPEKPEDNYPYVYNHPSGNKVLVVQAVCHAKYVGNLTVFFDKKGKVVTYEGAPIYMDTKVEQDKDVLEAMKPWRKLIDEKTKLVVGRTNVDLPRDICRSEECALGNLYTDSMIYAFGGKENCKSGSTWTTAPIAFVHAGAMRSSLHQGDILYSDALLLSPFTNMVVAYDLPGAQLKAALEFSAAPKNEDEKRRFLQMSGLKVTYNMSRAANNRIVDLKVRTNVCPYDQYENLDEKKTYRVVSPSFLQGGGDGFKMLRDYAKNIQNQKIDLDALVDYLKKFSPLAPKAEGRITIIH.

The N-terminal stretch at 1–25 is a signal peptide; it reads MKSLIGTLGLYCLFILTNNVVSSYG. Residues Asp38, His40, and Asp91 each coordinate a divalent metal cation. Asn105 is a glycosylation site (N-linked (GlcNAc...) asparagine). Asn123 contacts a divalent metal cation. Residue Asn198 is glycosylated (N-linked (GlcNAc...) asparagine). His225 and His249 together coordinate a divalent metal cation. A glycan (N-linked (GlcNAc...) asparagine) is linked at Asn295. Residues Arg358, Arg402, and Phe421 each contribute to the AMP site. Residue Asn465 is glycosylated (N-linked (GlcNAc...) asparagine). AMP is bound by residues Phe505 and Asp511.

The protein belongs to the 5'-nucleotidase family. Requires Mg(2+) as cofactor. It depends on Mn(2+) as a cofactor. Salivary gland (at protein level). Saliva (at protein level).

The protein localises to the secreted. The catalysed reaction is a ribonucleoside 5'-triphosphate + 2 H2O = a ribonucleoside 5'-phosphate + 2 phosphate + 2 H(+). Its activity is regulated as follows. DEPC (2 mM), sodium fluoride (10 mM) and 4,4'-Diisothiocyano-2,2'-stilbenedisulfonic acid (DIDS, 100 uM) nearly completely abrogate activity. Concanavalin A enhances activity. Its function is as follows. Facilitates hematophagy by inhibiting ADP-dependent platelet aggregation and promoting disaggregation of ADP-stimulated platelets in the host. Cleaves adenosine triphosphate (ATP) and adenosine diphosphate (ADP) to adenosine monophosphate (AMP) and inorganic phosphate. Interacts with fibrinogen receptor integrin alpha-IIb/beta-3 (ITGA2B/ITGB3). This Glossina morsitans morsitans (Savannah tsetse fly) protein is 5'-nucleotidase-related protein.